A 290-amino-acid chain; its full sequence is Ribosomal RNA small subunit methyltransferase A (290 aa).

S-adenosyl-L-methionine-binding residues include N27, L29, G54, E75, D100, and N125.

This sequence belongs to the class I-like SAM-binding methyltransferase superfamily. rRNA adenine N(6)-methyltransferase family. RsmA subfamily.

It is found in the cytoplasm. It carries out the reaction adenosine(1518)/adenosine(1519) in 16S rRNA + 4 S-adenosyl-L-methionine = N(6)-dimethyladenosine(1518)/N(6)-dimethyladenosine(1519) in 16S rRNA + 4 S-adenosyl-L-homocysteine + 4 H(+). In terms of biological role, specifically dimethylates two adjacent adenosines (A1518 and A1519) in the loop of a conserved hairpin near the 3'-end of 16S rRNA in the 30S particle. May play a critical role in biogenesis of 30S subunits. In Streptococcus pneumoniae (strain JJA), this protein is Ribosomal RNA small subunit methyltransferase A.